A 195-amino-acid chain; its full sequence is Myelin basic protein (195 aa).

Ala2 carries the post-translational modification N-acetylalanine. Phosphoserine occurs at positions 8 and 13. At Tyr15 the chain carries Phosphotyrosine. Thr18 is modified (phosphothreonine). At Ser20 the chain carries Phosphoserine. Thr21 bears the Phosphothreonine mark. Citrulline is present on residues Arg26 and Arg32. Thr36 is modified (phosphothreonine). Ser41 carries the post-translational modification Phosphoserine. Residues Arg44 and Arg50 each carry the omega-N-methylarginine modification. The interval 45–79 (FFSGDRGAPKRGSGKVPWLKQSRSPLPSHARSRPG) is disordered. Ser57 bears the Phosphoserine mark. Residue Thr92 is modified to Phosphothreonine. Position 94 is a phosphotyrosine (Tyr94). Ser101 is modified (phosphoserine). 3 positions are modified to phosphothreonine: Thr104, Thr119, and Thr122. Residues 117-139 (IVTPRTPPPSQGKGRGLSLSRFS) form a disordered region. Position 127 is a deamidated glutamine (Gln127). Arg131 carries the post-translational modification Omega-N-methylarginine; alternate. At Arg131 the chain carries Symmetric dimethylarginine; alternate. A Phosphoserine modification is found at Ser139. At Lys146 the chain carries N6-acetyllysine. Arg154 carries the citrulline modification. Deamidated glutamine is present on Gln172. Citrulline is present on Arg184. The residue at position 186 (Ser186) is a Phosphoserine. Ser190 bears the Phosphoserine; by UHMK1 mark. Arg195 is modified (citrulline).

It belongs to the myelin basic protein family. Homodimer. As in other animals, several charge isomers may be produced as a result of optional post-translational modifications, such as phosphorylation of serine or threonine residues, deamidation of glutamine or asparagine residues, citrullination and methylation of arginine residues. Post-translationally, arg-131 was found to be 44% monomethylated and 11% symmetrically dimethylated. In terms of processing, phosphorylated by TAOK2, VRK2, MAPK11, MAPK12, MAPK14 and MINK1. Proteolytically cleaved in B cell lysosomes by cathepsin CTSG which degrades the major immunogenic MBP epitope and prevents the activation of MBP-specific autoreactive T cells. Found in both the central and the peripheral nervous system.

It is found in the myelin membrane. Its function is as follows. Is, with PLP, the most abundant protein component of the myelin membrane in the CNS. Has a role in both the formation and stabilization of this compact multilayer arrangement of bilayers. Each splice variant and charge isomer may have a specialized function in the assembly of an optimized, biochemically functional myelin membrane. The chain is Myelin basic protein (Mbp) from Rattus norvegicus (Rat).